Consider the following 340-residue polypeptide: MTTLNRSELLFVYDAQDCNPNGNPIGDNRPRRDPDTGQGIITDVRLKRYLRDQLQDDGFDIYVKKTEGRSHTRTKLIKDVLGGVDDADDLEDLGDVAEAFLDAATDVRYFGSTLSFEASDKDEDEAFRDALNSSLPNNYQGPVQFLPSKSLNEVEENEEYDSLTSVISTGEGNRQGGFDLDDKRIKYGIFPFWGLVDNNGAESTNLSQADVERLDTLCWRALKNQTTSRSKLGQEPRLYVRVEYEEGNYHVGGLQNLLELGDDSSESLRSVKDVVVDVTELVETLERVADRIDTLHVVGDGRLELDIGDETIRADEFWSHLSEAGHDVHEIDVLNERDLA.

As to quaternary structure, component of the Cascade-like complex (Cascade I-B), composed of Cas5, Cas6, Cas7 and crRNA.

Its subcellular location is the cytoplasm. CRISPR (clustered regularly interspaced short palindromic repeat) is an adaptive immune system that provides protection against mobile genetic elements (viruses, transposable elements and conjugative plasmids). CRISPR clusters contain sequences complementary to antecedent mobile elements and target invading nucleic acids. CRISPR clusters are transcribed and processed into CRISPR RNA (crRNA). Plasmid targeted by CRISPR locus P1 transform wild-type cells very poorly. This protein helps process or stabilize pre-crRNA into individual crRNA units, in vivo Cas6 and Cas7 are also required for optimal crRNA processing and/or stability. The sequence is that of CRISPR-associated protein Cas7 from Haloferax volcanii (strain ATCC 29605 / DSM 3757 / JCM 8879 / NBRC 14742 / NCIMB 2012 / VKM B-1768 / DS2) (Halobacterium volcanii).